The sequence spans 655 residues: Protein movement modulator (655 aa).

Topologically, residues 1-54 are extracellular; sequence MEQPSILVKILHSIPHVNYTFRRVNDTFNPDSDVYLEPTNNKLQCQQKGIELQS. N-linked (GlcNAc...) asparagine glycans are attached at residues N18 and N25. A helical transmembrane segment spans residues 55–75; it reads LVILASIPAGLLIGSLLGLLL. Topologically, residues 76 to 95 are cytoplasmic; sequence YLLTRCCDRRQRKPSAQRCQ. The chain crosses the membrane as a helical span at residues 96–116; sequence SCSLVIITLMTCAAIGLGLYG. Topologically, residues 117–231 are extracellular; it reads NDDFHNGLLQ…GEFYESIRWP (115 aa). N171, N188, and N211 each carry an N-linked (GlcNAc...) asparagine glycan. Residues 232–252 form a helical membrane-spanning segment; that stretch reads ATLAFLTVLLLLCTVLVIGVA. Residues 253-258 are Cytoplasmic-facing; sequence RRSRCT. The chain crosses the membrane as a helical span at residues 259-279; the sequence is LIFFSVSGLFCIIICWLLAGV. Residues 280–401 are Extracellular-facing; sequence YLASSVAAGD…ALRGLCGGGL (122 aa). N-linked (GlcNAc...) asparagine glycans are attached at residues N326 and N372. Residues 402–422 traverse the membrane as a helical segment; that stretch reads LGLSLMMVAGLLTSFLLTILV. At 423–655 the chain is on the cytoplasmic side; it reads YADSHAWIYL…CKTLESNDFY (233 aa). The disordered stretch occupies residues 446 to 576; that stretch reads APLFPASNAP…NNHYNNTQHR (131 aa). Residues 450 to 464 show a composition bias toward low complexity; the sequence is PASNAPSASISPTAP. Residues 465–480 are compositionally biased toward polar residues; it reads LSTGTINRTLLHHQQA. Positions 482 to 509 are enriched in gly residues; sequence SGGGSGTLPGSGGGAGAGGGVGANGHNG. Low complexity-rich tracts occupy residues 526 to 539 and 546 to 576; these read SPSS…STAT and SYHN…TQHR. Phosphoserine occurs at positions 597 and 599.

This sequence belongs to the tweety family.

It is found in the cell membrane. The enzyme catalyses chloride(in) = chloride(out). Probable large-conductance Ca(2+)-activated chloride channel. Modulator of embryonic movement. This is Protein movement modulator from Drosophila melanogaster (Fruit fly).